The chain runs to 149 residues: Calmodulin-3 (149 aa).

Position 2 is an N-acetylalanine (Ala2). 4 consecutive EF-hand domains span residues 8–43 (DQIAEFKEAFSLFDKDGDGCITTKELGTVMRSLGQN), 44–79 (PTEAELQDMINEVDADGNGTIDFPEFLNLMARKMKD), 81–116 (DSEEELKEAFRVFDKDQNGFISAAELRHVMTNLGEK), and 117–149 (LTDEEVDEMIREADVDGDGQINYDEFVKVMMAK). Ca(2+) is bound by residues Asp21, Asp23, Asp25, Cys27, Glu32, Asp57, Asp59, Asn61, Thr63, Glu68, Asp94, Asp96, Asn98, and Glu105. N6,N6,N6-trimethyllysine is present on Lys116. Ca(2+) is bound by residues Asp130, Asp132, Asp134, Gln136, and Glu141.

It belongs to the calmodulin family.

Its function is as follows. Calmodulin mediates the control of a large number of enzymes, ion channels and other proteins by Ca(2+). Among the enzymes to be stimulated by the calmodulin-Ca(2+) complex are a number of protein kinases and phosphatases. This Oryza sativa subsp. indica (Rice) protein is Calmodulin-3 (CAM3).